The primary structure comprises 2820 residues: Neurofibromin (2820 aa).

Position 2 is an N-acetylalanine (Ala2). Residues Ser866 and Ser878 each carry the phosphoserine modification. Positions 1253–1463 (HLLYQLLWNM…DLARRFFLDI (211 aa)) constitute a Ras-GAP domain. The CRAL-TRIO domain maps to 1561–1719 (EKEEFKALKT…ATLALEEDLK (159 aa)). Residues 1561-1818 (EKEEFKALKT…RTRWELSQPD (258 aa)) form a lipid binding region. Residues Ser2169 and Ser2448 each carry the phosphoserine modification. The segment at 2457 to 2482 (YPIHHGDPSSRTLKETQPWSSPRGSE) is disordered. A compositionally biased stretch (basic and acidic residues) spans 2458–2470 (PIHHGDPSSRTLK). Thr2495 carries the post-translational modification Phosphothreonine. Phosphoserine is present on residues Ser2496, Ser2502, Ser2504, and Ser2524. A Bipartite nuclear localization signal motif is present at residues 2536–2552 (KRQEMESGITTPPKMRR). At Thr2546 the chain carries Phosphothreonine. Phosphoserine is present on residues Ser2578, Ser2783, and Ser2798. Positions 2768-2820 (TSQHSPGIDKENVELSPTTGHCNSGRTRHGSASQVQKQRSAGSFKRNSIKKIV) are disordered. A compositionally biased stretch (polar residues) spans 2782 to 2808 (LSPTTGHCNSGRTRHGSASQVQKQRSA).

In terms of assembly, interacts with HTR6. Interacts with SPRED2. In terms of processing, ubiquitinated by RNF7/RBX2, leading to its degradation.

It localises to the nucleus. The protein localises to the nucleolus. Its subcellular location is the cell membrane. Stimulates the GTPase activity of Ras. NF1 shows greater affinity for Ras GAP, but lower specific activity. May be a regulator of Ras activity. This Rattus norvegicus (Rat) protein is Neurofibromin (Nf1).